The chain runs to 239 residues: Putative ABC transporter ATP-binding protein AlbC (239 aa).

The ABC transporter domain occupies 4–238 (LDIHDVSVWY…RREFFEVIGH (235 aa)). An ATP-binding site is contributed by 37 to 44 (GVNGAGKT).

This sequence belongs to the ABC transporter superfamily.

Its function is as follows. Involved in the production of the bacteriocin subtilosin. Required for immunity to subtilosin. The sequence is that of Putative ABC transporter ATP-binding protein AlbC (albC) from Bacillus subtilis (strain 168).